Here is a 190-residue protein sequence, read N- to C-terminus: Xanthine phosphoribosyltransferase 2 (190 aa).

Positions 20 and 27 each coordinate xanthine. Residue 129 to 133 (ANGCA) participates in 5-phospho-alpha-D-ribose 1-diphosphate binding. A xanthine-binding site is contributed by Lys-157.

This sequence belongs to the purine/pyrimidine phosphoribosyltransferase family. Xpt subfamily. As to quaternary structure, homodimer.

The protein resides in the cytoplasm. It carries out the reaction XMP + diphosphate = xanthine + 5-phospho-alpha-D-ribose 1-diphosphate. It functions in the pathway purine metabolism; XMP biosynthesis via salvage pathway; XMP from xanthine: step 1/1. Its function is as follows. Converts the preformed base xanthine, a product of nucleic acid breakdown, to xanthosine 5'-monophosphate (XMP), so it can be reused for RNA or DNA synthesis. The polypeptide is Xanthine phosphoribosyltransferase 2 (Clostridium botulinum (strain ATCC 19397 / Type A)).